A 195-amino-acid polypeptide reads, in one-letter code: Orotate phosphoribosyltransferase (195 aa).

5-phospho-alpha-D-ribose 1-diphosphate is bound by residues Arg86, Lys90, His92, and 111-119 (DDVATTGVS). Orotate contacts are provided by Thr115 and Arg143.

It belongs to the purine/pyrimidine phosphoribosyltransferase family. PyrE subfamily. As to quaternary structure, homodimer. It depends on Mg(2+) as a cofactor.

The catalysed reaction is orotidine 5'-phosphate + diphosphate = orotate + 5-phospho-alpha-D-ribose 1-diphosphate. It functions in the pathway pyrimidine metabolism; UMP biosynthesis via de novo pathway; UMP from orotate: step 1/2. In terms of biological role, catalyzes the transfer of a ribosyl phosphate group from 5-phosphoribose 1-diphosphate to orotate, leading to the formation of orotidine monophosphate (OMP). The protein is Orotate phosphoribosyltransferase of Saccharolobus solfataricus (strain ATCC 35092 / DSM 1617 / JCM 11322 / P2) (Sulfolobus solfataricus).